A 179-amino-acid polypeptide reads, in one-letter code: tRNA-splicing endonuclease (179 aa).

Residues Tyr115, His123, and Lys154 contribute to the active site.

This sequence belongs to the tRNA-intron endonuclease family. Archaeal short subfamily. As to quaternary structure, homotetramer; although the tetramer contains four active sites, only two participate in the cleavage. Therefore, it should be considered as a dimer of dimers.

It catalyses the reaction pretRNA = a 3'-half-tRNA molecule with a 5'-OH end + a 5'-half-tRNA molecule with a 2',3'-cyclic phosphate end + an intron with a 2',3'-cyclic phosphate and a 5'-hydroxyl terminus.. Endonuclease that removes tRNA introns. Cleaves pre-tRNA at the 5'- and 3'-splice sites to release the intron. The products are an intron and two tRNA half-molecules bearing 2',3' cyclic phosphate and 5'-OH termini. Recognizes a pseudosymmetric substrate in which 2 bulged loops of 3 bases are separated by a stem of 4 bp. The protein is tRNA-splicing endonuclease of Methanopyrus kandleri (strain AV19 / DSM 6324 / JCM 9639 / NBRC 100938).